A 127-amino-acid chain; its full sequence is Fumarate reductase subunit C (127 aa).

3 helical membrane passes run 30–50 (ATIL…GSLV), 67–87 (IVVA…QTFF), and 107–127 (VVVL…LVIV).

Belongs to the FrdC family. As to quaternary structure, part of an enzyme complex containing four subunits: a flavoprotein (FrdA), an iron-sulfur protein (FrdB), and two hydrophobic anchor proteins (FrdC and FrdD).

Its subcellular location is the cell inner membrane. Functionally, anchors the catalytic components of the fumarate reductase complex to the cell membrane, binds quinones. The sequence is that of Fumarate reductase subunit C from Aliivibrio salmonicida (strain LFI1238) (Vibrio salmonicida (strain LFI1238)).